Reading from the N-terminus, the 675-residue chain is MNPYQNKNEYEIFNAPSNGFSKSNNYSRYPLANKPNQPLKNTNYKDWLNVCQDNQQYGNNAGNFASSETIVGVSAGIIVVGTMLGAFAAPVLAAGIISFGTLLPIFWQGSDPANVWQDLLNIGGRPIQEIDKNIINVLTSIVTPIKNQLDKYQEFFDKWEPARTHANAKAVHDLFTTLEPIIDKDLDMLKNNASYRIPTLPAYAQIATWHLNLLKHAATYYNIWLQNQGINPSTFNSSNYYQGYLKRKIQEYTDYCIQTYNAGLTMIRTNTNATWNMYNTYRLEMTLTVLDLIAIFPNYDPEKYPIGVKSELIREVYTNVNSDTFRTITELENGLTRNPTLFTWINQGRFYTRNSRDILDPYDIFSFTGNQMAFTHTNDDRNIIWGAVHGNIISQDTSKVFPFYRNKPIDKVEIVRHREYSDIIYEMIFFSNSSEVFRYSSNSTIENNYKRTDSYMIPKQTWKNEEYGHTLSYIKTDNYIFSVVRERRRVAFSWTHTSVDFQNTIDLDNITQIHALKALKVSSDSKIVKGPGHTGGDLVILKDSMDFRVRFLKNVSRQYQVRIRYATNAPKTTVFLTGIDTISVELPSTTSRQNPNATDLTYADFGYVTFPRTVPNKTFEGEDTLLMTLYGTPNHSYNIYIDKIEFIPITQSVLDYTEKQNIEKTQKIVNDLFVN.

It belongs to the delta endotoxin family.

Functionally, promotes colloidosmotic lysis by binding to the midgut epithelial cells of mosquitos. Active on Aedes aegypti. The chain is Pesticidal crystal protein Cry10Aa (cry10Aa) from Bacillus thuringiensis subsp. israelensis.